Reading from the N-terminus, the 115-residue chain is UPF0295 protein BPUM_0828 (115 aa).

The next 2 helical transmembrane spans lie at 13–33 and 41–61; these read TFAL…VFFK and FFML…FWIG.

The protein belongs to the UPF0295 family.

The protein localises to the cell membrane. This is UPF0295 protein BPUM_0828 from Bacillus pumilus (strain SAFR-032).